A 302-amino-acid chain; its full sequence is N-acetyl-D-glucosamine kinase (302 aa).

Residues 4–11 and 133–140 each bind ATP; these read GFDVGGTK and GFGGGLVY. Zn(2+)-binding residues include histidine 157, cysteine 177, cysteine 179, and cysteine 184.

This sequence belongs to the ROK (NagC/XylR) family. NagK subfamily.

The enzyme catalyses N-acetyl-D-glucosamine + ATP = N-acetyl-D-glucosamine 6-phosphate + ADP + H(+). It functions in the pathway cell wall biogenesis; peptidoglycan recycling. Catalyzes the phosphorylation of N-acetyl-D-glucosamine (GlcNAc) derived from cell-wall degradation, yielding GlcNAc-6-P. This Vibrio atlanticus (strain LGP32) (Vibrio splendidus (strain Mel32)) protein is N-acetyl-D-glucosamine kinase.